A 67-amino-acid polypeptide reads, in one-letter code: Large ribosomal subunit protein uL29 (67 aa).

This sequence belongs to the universal ribosomal protein uL29 family.

The polypeptide is Large ribosomal subunit protein uL29 (Wolbachia pipientis subsp. Culex pipiens (strain wPip)).